The chain runs to 190 residues: Inner membrane-spanning protein YciB (190 aa).

The next 6 helical transmembrane spans lie at F3–Y23, V24–H44, A49–H69, W76–V96, L121–F141, and F149–L169.

Belongs to the YciB family.

The protein resides in the cell inner membrane. Functionally, plays a role in cell envelope biogenesis, maintenance of cell envelope integrity and membrane homeostasis. This Ralstonia pickettii (strain 12J) protein is Inner membrane-spanning protein YciB.